Here is a 143-residue protein sequence, read N- to C-terminus: Large ribosomal subunit protein uL15 (143 aa).

The tract at residues 1–52 (MELNSIQPADGAKHYKRRVGRGIGSGLGKTSGRGHKGQKSRSGGFHKVGFEG) is disordered. The segment covering 21 to 31 (RGIGSGLGKTS) has biased composition (gly residues).

Belongs to the universal ribosomal protein uL15 family. In terms of assembly, part of the 50S ribosomal subunit.

In terms of biological role, binds to the 23S rRNA. The sequence is that of Large ribosomal subunit protein uL15 from Janthinobacterium sp. (strain Marseille) (Minibacterium massiliensis).